The following is a 565-amino-acid chain: Thiol:disulfide interchange protein DsbD (565 aa).

The signal sequence occupies residues 1-19 (MAQRIFTLILLLCSTSVFA). 2 disulfides stabilise this stretch: C122–C128 and C182–C304. 7 helical membrane passes run 163–183 (LPFS…TPCV), 208–228 (LLTF…GLVV), 243–263 (YVLI…FGLF), 296–316 (IAGL…LLYI), 323–343 (WLGG…LMLI), 357–377 (WMEQ…VFLL), and 384–404 (VWGL…AFIT). Residues 434–565 (WAFGATHTAQ…FSAHLRDRQP (132 aa)) form the Thioredoxin domain. C480 and C483 are disulfide-bonded.

Belongs to the thioredoxin family. DsbD subfamily.

It localises to the cell inner membrane. The catalysed reaction is [protein]-dithiol + NAD(+) = [protein]-disulfide + NADH + H(+). It catalyses the reaction [protein]-dithiol + NADP(+) = [protein]-disulfide + NADPH + H(+). Its function is as follows. Required to facilitate the formation of correct disulfide bonds in some periplasmic proteins and for the assembly of the periplasmic c-type cytochromes. Acts by transferring electrons from cytoplasmic thioredoxin to the periplasm. This transfer involves a cascade of disulfide bond formation and reduction steps. The sequence is that of Thiol:disulfide interchange protein DsbD from Shigella boydii serotype 4 (strain Sb227).